A 154-amino-acid chain; its full sequence is 17.4 kDa class I heat shock protein (154 aa).

The 115-residue stretch at Asp40–Gly154 folds into the sHSP domain.

The protein belongs to the small heat shock protein (HSP20) family. As to quaternary structure, may form oligomeric structures.

The protein resides in the cytoplasm. This is 17.4 kDa class I heat shock protein (HSP17.4) from Oryza sativa subsp. japonica (Rice).